The chain runs to 724 residues: Catalase-peroxidase (724 aa).

A cross-link (tryptophyl-tyrosyl-methioninium (Trp-Tyr) (with M-252)) is located at residues 98 to 226 (WHSAGTYRIA…LATVMMGLIY (129 aa)). The active-site Proton acceptor is the His99. A cross-link (tryptophyl-tyrosyl-methioninium (Tyr-Met) (with W-98)) is located at residues 226–252 (YVNPEGVDGNPDPLKTAQDMRVTFARM). Heme b is bound at residue His267.

This sequence belongs to the peroxidase family. Peroxidase/catalase subfamily. As to quaternary structure, homodimer or homotetramer. It depends on heme b as a cofactor. Post-translationally, formation of the three residue Trp-Tyr-Met cross-link is important for the catalase, but not the peroxidase activity of the enzyme.

The enzyme catalyses H2O2 + AH2 = A + 2 H2O. The catalysed reaction is 2 H2O2 = O2 + 2 H2O. In terms of biological role, bifunctional enzyme with both catalase and broad-spectrum peroxidase activity. The sequence is that of Catalase-peroxidase from Vibrio cholerae serotype O1 (strain ATCC 39541 / Classical Ogawa 395 / O395).